The following is a 211-amino-acid chain: Large ribosomal subunit protein uL4 (211 aa).

The segment at 52 to 79 is disordered; the sequence is GRAEVHGSNSKPYSQKGTGRARRGDKKS. Polar residues predominate over residues 58–68; it reads GSNSKPYSQKG.

This sequence belongs to the universal ribosomal protein uL4 family. In terms of assembly, part of the 50S ribosomal subunit.

Functionally, one of the primary rRNA binding proteins, this protein initially binds near the 5'-end of the 23S rRNA. It is important during the early stages of 50S assembly. It makes multiple contacts with different domains of the 23S rRNA in the assembled 50S subunit and ribosome. In terms of biological role, forms part of the polypeptide exit tunnel. The polypeptide is Large ribosomal subunit protein uL4 (Treponema denticola (strain ATCC 35405 / DSM 14222 / CIP 103919 / JCM 8153 / KCTC 15104)).